The following is a 210-amino-acid chain: Chloramphenicol acetyltransferase (210 aa).

The active site involves His79.

The protein belongs to the transferase hexapeptide repeat family.

The enzyme catalyses chloramphenicol + acetyl-CoA = chloramphenicol 3-acetate + CoA. This enzyme is an effector of chloramphenicol resistance in bacteria. The sequence is that of Chloramphenicol acetyltransferase (cat) from Morganella morganii (Proteus morganii).